A 270-amino-acid chain; its full sequence is DNA packaging protein OPG160 (270 aa).

25-32 (GGSGSGKT) contributes to the ATP binding site.

The protein belongs to the orthopoxvirus OPG160 protein family. As to quaternary structure, interacts with protein OPG137.

Participates in viral DNA packaging and virion morphogenesis. This Variola virus (isolate Human/India/Ind3/1967) (VARV) protein is DNA packaging protein OPG160 (OPG160).